The primary structure comprises 281 residues: tRNA pseudouridine synthase A (281 aa).

The Nucleophile role is filled by Asp-55. Tyr-110 is a binding site for substrate.

Belongs to the tRNA pseudouridine synthase TruA family.

It catalyses the reaction uridine(38/39/40) in tRNA = pseudouridine(38/39/40) in tRNA. In terms of biological role, formation of pseudouridine at positions 38, 39 and 40 in the anticodon stem and loop of transfer RNAs. This is tRNA pseudouridine synthase A from Methanocorpusculum labreanum (strain ATCC 43576 / DSM 4855 / Z).